The primary structure comprises 571 residues: Septation ring formation regulator EzrA (571 aa).

Topologically, residues 1-3 are extracellular; it reads MYY. The chain crosses the membrane as a helical span at residues 4–22; it reads MLIGFIIVVIAIISAGYIL. The Cytoplasmic segment spans residues 23–571; that stretch reads KRKHYQRINE…ESKVSVDDIE (549 aa). Coiled-coil stretches lie at residues 169 to 214, 249 to 298, 326 to 374, 400 to 438, and 474 to 529; these read VETK…AQME, AQME…DTLE, DALA…ASGE, KFAE…RERL, and TQDW…ENHF.

The protein belongs to the EzrA family.

The protein resides in the cell membrane. Negative regulator of FtsZ ring formation; modulates the frequency and position of FtsZ ring formation. Inhibits FtsZ ring formation at polar sites. Interacts either with FtsZ or with one of its binding partners to promote depolymerization. In Listeria welshimeri serovar 6b (strain ATCC 35897 / DSM 20650 / CCUG 15529 / CIP 8149 / NCTC 11857 / SLCC 5334 / V8), this protein is Septation ring formation regulator EzrA.